The primary structure comprises 567 residues: Oxygen-dependent choline dehydrogenase (567 aa).

Position 6–35 (6–35) interacts with FAD; it reads DYIIVGAGSAGNTLATRLTEDEGVTVLLLE. His-475 functions as the Proton acceptor in the catalytic mechanism.

The protein belongs to the GMC oxidoreductase family. FAD is required as a cofactor.

The enzyme catalyses choline + A = betaine aldehyde + AH2. The catalysed reaction is betaine aldehyde + NAD(+) + H2O = glycine betaine + NADH + 2 H(+). It functions in the pathway amine and polyamine biosynthesis; betaine biosynthesis via choline pathway; betaine aldehyde from choline (cytochrome c reductase route): step 1/1. Its function is as follows. Involved in the biosynthesis of the osmoprotectant glycine betaine. Catalyzes the oxidation of choline to betaine aldehyde and betaine aldehyde to glycine betaine at the same rate. This chain is Oxygen-dependent choline dehydrogenase, found in Pseudomonas fluorescens (strain Pf0-1).